We begin with the raw amino-acid sequence, 354 residues long: MNEAIIQLDHIDITFRQKKRVIEAVKDVTVHINQGDIYGIVGYSGAGKSTLVRVINLLQAPTNGKITVDGDVTFEQGKVQLSANALRQKRRDIGMIFQHFNLMAQKTAKENVAFALRHSSLSKTEKEHKVIELLELVGLSERADNYPAQLSGGQKQRVAIARALANDPKILISDEATSALDPKTTKQILALLQELNRKLGLTIVMITHEMQIVKDICNRVAVMQNGVLIEEGSVLDIFSNPKEALTQEFITTATGIDEALEKINQQDIVKHLPANALLAQLKYAGTSTDEPLLNSIYRQFEVTANILYGNIEILDHIPVGDMIVVLEGQAENILAAEKALHEAGVDVSILKRGA.

Positions 8-250 (LDHIDITFRQ…PKEALTQEFI (243 aa)) constitute an ABC transporter domain. ATP is bound at residue 42-49 (GYSGAGKS).

It belongs to the ABC transporter superfamily. Methionine importer (TC 3.A.1.24) family. The complex is composed of two ATP-binding proteins (MetN), two transmembrane proteins (MetI) and a solute-binding protein (MetQ).

It is found in the cell membrane. The catalysed reaction is L-methionine(out) + ATP + H2O = L-methionine(in) + ADP + phosphate + H(+). It carries out the reaction D-methionine(out) + ATP + H2O = D-methionine(in) + ADP + phosphate + H(+). Part of the ABC transporter complex MetNIQ involved in methionine import. Responsible for energy coupling to the transport system. The polypeptide is Methionine import ATP-binding protein MetN (Streptococcus pyogenes serotype M3 (strain ATCC BAA-595 / MGAS315)).